Consider the following 391-residue polypeptide: Alpha-2B adrenergic receptor (391 aa).

A helical transmembrane segment spans residues 1 to 25 (AIAAVITFLILFTIFGNALVILAVL). Residues 26–36 (TSRSLRAPQNL) are Cytoplasmic-facing. The chain crosses the membrane as a helical span at residues 37–62 (FLVSLAAADILVATLIIPFSLANELL). The Extracellular portion of the chain corresponds to 63–72 (GYWYFRRTWC). C72 and C151 are oxidised to a cystine. A helical transmembrane segment spans residues 73–95 (EVYLALDVLFCTSSIVHLCAISL). Topologically, residues 96-117 (DRYWAVSRALEYNSKRTPRRIK) are cytoplasmic. Residues 118-140 (CIILTVWLIAAVISLPPLIYKGD) traverse the membrane as a helical segment. Residues 141 to 156 (QGPQPRGRPQCKLNQE) lie on the Extracellular side of the membrane. A helical transmembrane segment spans residues 157–180 (AWYILASSIGSFFAPCLIMILVYL). Topologically, residues 181–355 (RIYLIAKRSH…LTREKRFTFV (175 aa)) are cytoplasmic. 2 disordered regions span residues 194–218 (PRAK…APSS) and 233–312 (EANR…PLQQ). Residues 233 to 247 (EANRHSKSTGEKVEG) show a composition bias toward basic and acidic residues. The span at 256–266 (PGVPPSWPPLP) shows a compositional bias: pro residues. Residues 271–281 (GQEEDIYRASP) are compositionally biased toward basic and acidic residues. Residues 282–294 (EEEAGDDEEEECE) show a composition bias toward acidic residues. Low complexity predominate over residues 295 to 309 (PQAVPVSPASACSPP). The chain crosses the membrane as a helical span at residues 356–379 (LAVVIGVFVLCWFPFFFSYSLGAI). The Extracellular portion of the chain corresponds to 380 to 388 (CPQHCKVPH). A helical transmembrane segment spans residues 389–391 (GLF).

Belongs to the G-protein coupled receptor 1 family. Adrenergic receptor subfamily. ADRA2B sub-subfamily. As to quaternary structure, interacts with RAB26. Interacts with PPP1R9B. Interacts with GGA1, GGA2 and GGA3.

It is found in the cell membrane. In terms of biological role, alpha-2 adrenergic receptors mediate the catecholamine-induced inhibition of adenylate cyclase through the action of G proteins. The polypeptide is Alpha-2B adrenergic receptor (ADRA2B) (Erinaceus europaeus (Western European hedgehog)).